The primary structure comprises 410 residues: Cysteine desulfurase IscS (410 aa).

Pyridoxal 5'-phosphate is bound by residues 80–81 (AT), Asn160, Gln188, and 208–210 (SGH). Lys211 bears the N6-(pyridoxal phosphate)lysine mark. Residue Thr248 participates in pyridoxal 5'-phosphate binding. The active-site Cysteine persulfide intermediate is the Cys334. Cys334 provides a ligand contact to [2Fe-2S] cluster.

The protein belongs to the class-V pyridoxal-phosphate-dependent aminotransferase family. NifS/IscS subfamily. In terms of assembly, homodimer. Forms a heterotetramer with IscU, interacts with other sulfur acceptors. The cofactor is pyridoxal 5'-phosphate.

The protein localises to the cytoplasm. The enzyme catalyses (sulfur carrier)-H + L-cysteine = (sulfur carrier)-SH + L-alanine. It functions in the pathway cofactor biosynthesis; iron-sulfur cluster biosynthesis. Master enzyme that delivers sulfur to a number of partners involved in Fe-S cluster assembly, tRNA modification or cofactor biosynthesis. Catalyzes the removal of elemental sulfur atoms from cysteine to produce alanine. Functions as a sulfur delivery protein for Fe-S cluster synthesis onto IscU, an Fe-S scaffold assembly protein, as well as other S acceptor proteins. In Rickettsia conorii (strain ATCC VR-613 / Malish 7), this protein is Cysteine desulfurase IscS.